The following is a 226-amino-acid chain: Ribosomal RNA small subunit methyltransferase G (226 aa).

Residues Gly95, Leu100, 146–147, and Arg159 contribute to the S-adenosyl-L-methionine site; that span reads VE.

This sequence belongs to the methyltransferase superfamily. RNA methyltransferase RsmG family.

The protein resides in the cytoplasm. It carries out the reaction guanosine(527) in 16S rRNA + S-adenosyl-L-methionine = N(7)-methylguanosine(527) in 16S rRNA + S-adenosyl-L-homocysteine. Functionally, specifically methylates the N7 position of guanine in position 527 of 16S rRNA. The sequence is that of Ribosomal RNA small subunit methyltransferase G from Acidovorax ebreus (strain TPSY) (Diaphorobacter sp. (strain TPSY)).